The primary structure comprises 347 residues: MLEACESKLDIIKNFVPSWFAAVMGTGILAVDSLLYSSYLPILKDVAVGLFYFNVLLFFIFLVPWVLRWIMFKDNALADLKHPVLSAFYPTIAVSCLVLGADFINIGHNMFWGGVFWTLGAIGMFLFSLIVPFYMFKSESIKLDHVNPGWYIPPVGLIVIPIAGSLIMPHLTGVWHELTVLINYFGWGAGFFLYLALLAVVIYRFILHHPLPSAMAPTVWINLGPIGAGIVALINMVNNSPFITIKEPFYIFSFIFWGFGLWWSLMAIIMTLYYVKKLKLPYAMSWWAFIFPLGAYVASSHLVYKIFKFSIIDYIGFGLYWLLFFFWAITLIKTTNKVYTGEVFKGH.

The next 10 membrane-spanning stretches (helical) occupy residues 15–35 (FVPSWFAAVMGTGILAVDSLL), 46–66 (VAVGLFYFNVLLFFIFLVPWV), 84–104 (VLSAFYPTIAVSCLVLGADFI), 111–131 (FWGGVFWTLGAIGMFLFSLIV), 149–169 (GWYIPPVGLIVIPIAGSLIMP), 182–202 (INYFGWGAGFFLYLALLAVVI), 214–234 (AMAPTVWINLGPIGAGIVALI), 249–269 (FYIFSFIFWGFGLWWSLMAII), 283–303 (AMSWWAFIFPLGAYVASSHLV), and 312–332 (IDYIGFGLYWLLFFFWAITLI).

Belongs to the tellurite-resistance/dicarboxylate transporter (TDT) family.

Its subcellular location is the cell membrane. This is an uncharacterized protein from Methanocaldococcus jannaschii (strain ATCC 43067 / DSM 2661 / JAL-1 / JCM 10045 / NBRC 100440) (Methanococcus jannaschii).